Here is a 584-residue protein sequence, read N- to C-terminus: DNA mismatch repair protein MutL (584 aa).

It belongs to the DNA mismatch repair MutL/HexB family.

In terms of biological role, this protein is involved in the repair of mismatches in DNA. It is required for dam-dependent methyl-directed DNA mismatch repair. May act as a 'molecular matchmaker', a protein that promotes the formation of a stable complex between two or more DNA-binding proteins in an ATP-dependent manner without itself being part of a final effector complex. This is DNA mismatch repair protein MutL from Syntrophomonas wolfei subsp. wolfei (strain DSM 2245B / Goettingen).